The primary structure comprises 413 residues: MKIYAVGGAIRDALLGLPVRDRDYVVVGATPEQMAAQRFRPVGKDFPVFLHPDTHEEYALARTERKTAAGYHGFQFYYAPDVTLEQDLVRRDLTINAMAREVSPDGALVGPVVDPFGGQADLRAKLFRHVGDAFVEDPVRILRVARFAARFAEFAVAPDTAALMRAMVDAGEVDALVPERVWQELARGLMEAKPSRMFAVLRECGALARILPEIDALFGVPQRADYHPEVDTGVHVMMVIDHAAKQGYSLPVRFAALTHDLGKATTPADVLPRHIGHEGRSVDLLKPLCERLRVPNECRDLALVVAREHGNLHRVMEMGAAALVRLLERADALRKPARFAEALQASEADARGRLGLETKPYPQAERLRQALVAARAVDAGAIAQGLAGEPAKIRDAVHRARVRAVAQAVGVAD.

G8 and R11 together coordinate ATP. The CTP site is built by G8 and R11. Positions 21 and 23 each coordinate Mg(2+). ATP-binding residues include R91, R143, and R146. Positions 91, 143, and 146 each coordinate CTP. The 102-residue stretch at 232-333 (TGVHVMMVID…VRLLERADAL (102 aa)) folds into the HD domain.

Belongs to the tRNA nucleotidyltransferase/poly(A) polymerase family. Bacterial CCA-adding enzyme type 1 subfamily. In terms of assembly, monomer. Can also form homodimers and oligomers. Mg(2+) is required as a cofactor. Ni(2+) serves as cofactor.

It catalyses the reaction a tRNA precursor + 2 CTP + ATP = a tRNA with a 3' CCA end + 3 diphosphate. It carries out the reaction a tRNA with a 3' CCA end + 2 CTP + ATP = a tRNA with a 3' CCACCA end + 3 diphosphate. Functionally, catalyzes the addition and repair of the essential 3'-terminal CCA sequence in tRNAs without using a nucleic acid template. Adds these three nucleotides in the order of C, C, and A to the tRNA nucleotide-73, using CTP and ATP as substrates and producing inorganic pyrophosphate. tRNA 3'-terminal CCA addition is required both for tRNA processing and repair. Also involved in tRNA surveillance by mediating tandem CCA addition to generate a CCACCA at the 3' terminus of unstable tRNAs. While stable tRNAs receive only 3'-terminal CCA, unstable tRNAs are marked with CCACCA and rapidly degraded. This is Multifunctional CCA protein from Burkholderia pseudomallei (strain 668).